The primary structure comprises 288 residues: Quinate/shikimate dehydrogenase (288 aa).

2 residues coordinate substrate: K71 and D107. NAD(+) contacts are provided by residues 132-135 (AGGA), 155-158 (NRRD), K205, 232-235 (CVYN), and G255.

It belongs to the shikimate dehydrogenase family. Homodimer.

The catalysed reaction is L-quinate + NAD(+) = 3-dehydroquinate + NADH + H(+). It catalyses the reaction L-quinate + NADP(+) = 3-dehydroquinate + NADPH + H(+). It carries out the reaction shikimate + NADP(+) = 3-dehydroshikimate + NADPH + H(+). The enzyme catalyses shikimate + NAD(+) = 3-dehydroshikimate + NADH + H(+). It functions in the pathway metabolic intermediate biosynthesis; chorismate biosynthesis; chorismate from D-erythrose 4-phosphate and phosphoenolpyruvate: step 4/7. The actual biological function of YdiB remains unclear, nor is it known whether 3-dehydroshikimate or quinate represents the natural substrate. Catalyzes the reversible NAD-dependent reduction of both 3-dehydroshikimate (DHSA) and 3-dehydroquinate to yield shikimate (SA) and quinate, respectively. It can use both NAD or NADP for catalysis, however it has higher catalytic efficiency with NAD. This chain is Quinate/shikimate dehydrogenase, found in Escherichia coli (strain SMS-3-5 / SECEC).